The primary structure comprises 429 residues: Enolase (429 aa).

Position 163 (Gln-163) interacts with (2R)-2-phosphoglycerate. Glu-205 serves as the catalytic Proton donor. Positions 242, 287, and 314 each coordinate Mg(2+). (2R)-2-phosphoglycerate-binding residues include Lys-339, Arg-368, Ser-369, and Lys-390. The active-site Proton acceptor is Lys-339.

This sequence belongs to the enolase family. Requires Mg(2+) as cofactor.

The protein resides in the cytoplasm. Its subcellular location is the secreted. It localises to the cell surface. It catalyses the reaction (2R)-2-phosphoglycerate = phosphoenolpyruvate + H2O. The protein operates within carbohydrate degradation; glycolysis; pyruvate from D-glyceraldehyde 3-phosphate: step 4/5. In terms of biological role, catalyzes the reversible conversion of 2-phosphoglycerate (2-PG) into phosphoenolpyruvate (PEP). It is essential for the degradation of carbohydrates via glycolysis. This is Enolase from Cupriavidus taiwanensis (strain DSM 17343 / BCRC 17206 / CCUG 44338 / CIP 107171 / LMG 19424 / R1) (Ralstonia taiwanensis (strain LMG 19424)).